The primary structure comprises 255 residues: uncharacterized protein (255 aa).

An N-terminal signal peptide occupies residues 1–18; it reads MRILIILSIILCSLFTKA.

It belongs to the MlaA family.

This is an uncharacterized protein from Rickettsia bellii (strain RML369-C).